The following is an 85-amino-acid chain: Large ribosomal subunit protein uL29 (85 aa).

The protein belongs to the universal ribosomal protein uL29 family.

The sequence is that of Large ribosomal subunit protein uL29 from Thermobifida fusca (strain YX).